We begin with the raw amino-acid sequence, 579 residues long: Glypican-2 (579 aa).

A signal peptide spans 1–21 (MSALRPLLLLLLHLCPGLGPG). O-linked (Xyl...) (heparan sulfate) serine glycosylation is found at Ser-55, Ser-92, and Ser-155. 2 disordered regions span residues 347–382 (GTPH…PTTA) and 483–552 (ALGQ…GRSR). Over residues 361–379 (APREEASRSWRASAEEERP) the composition is skewed to basic and acidic residues. Ser-498 and Ser-500 each carry an O-linked (Xyl...) (heparan sulfate) serine glycan. Residues 517–527 (VVPPARPPRPP) are compositionally biased toward pro residues. A lipid anchor (GPI-anchor amidated serine) is attached at Ser-556. Positions 557 to 579 (SVGLHTPLVLLLLPSALTLLVLR) are cleaved as a propeptide — removed in mature form.

The protein belongs to the glypican family. In terms of assembly, interacts (via heparan sulfate) with PTN; this interaction promotes neurite outgrowth through binding of PTN with chondroitin sulfate of proteoglycans, thereby releasing PTPRS of chondroitin sulfate proteoglycans (CSPGs) and leading to binding with heparan sulfate of GPC2. Interacts (heparan sulfate chain) with MDK; this interaction is inhibited by heparin followed by chondroitin sulfate E; this interaction induces GPC2 clustering through heparan sulfate chain; this interaction induces neuronal cell adhesion and neurite outgrowth.

Its subcellular location is the cell membrane. It is found in the secreted. It localises to the extracellular space. Cell surface proteoglycan that bears heparan sulfate. May fulfill a function related to the motile behaviors of developing neurons. This chain is Glypican-2 (Gpc2), found in Mus musculus (Mouse).